Reading from the N-terminus, the 506-residue chain is MPATSMEELVSLCKRRGFIFQGSEIYGGLQGFYDYGPLGVELKNNIKAAWWRSNVYERDDMEGLDASIIMHRMVLRHSGHEATFSDPMIDNKKNNKRYRLDHLLKDQKADVQAKVAEIMGESADNFAALVAALNAKPAQASAAFKEAGVRDPFSGEVGEWTDPKPFNMMFRTTIGPVADEESYGYLRPETAQGIFTNFKNVVDSTSRRLPFGIAQIGKAFRNEITPRNFIFRVRELEQMEIEFFVTPGTDEEWHEHWLEKRLKWWEDQGVPREKIEILDVPKEDLAHYSKRTYDLMYDYPTLGHEEIEGIANRSDYDLGSHTKSQSELGLVAKVEENNDSIAKLTIPHPETNKPVVPFVIEPSAGVDRAMLAVLSEAFTKETLENGNERIVLKLKPHLAPIKVAVIPLARNREEITDVAKAIKAELQGLGLGRVLYEDSGNIGKAYRRHDEVGTPYCVTVDFDTVGLGENTDESLKDTVTVRDRDTLAQERVKISELAGWIQAKLR.

Residues arginine 99 and glutamate 189 each coordinate substrate. ATP contacts are provided by residues 221–223 (RNE), 231–236 (FRVREL), 306–307 (EI), and 365–368 (GVDR). 236–240 (LEQME) lines the substrate pocket. 361 to 365 (EPSAG) contacts substrate.

This sequence belongs to the class-II aminoacyl-tRNA synthetase family. As to quaternary structure, homodimer.

It localises to the cytoplasm. It carries out the reaction tRNA(Gly) + glycine + ATP = glycyl-tRNA(Gly) + AMP + diphosphate. In terms of biological role, catalyzes the attachment of glycine to tRNA(Gly). This Deinococcus radiodurans (strain ATCC 13939 / DSM 20539 / JCM 16871 / CCUG 27074 / LMG 4051 / NBRC 15346 / NCIMB 9279 / VKM B-1422 / R1) protein is Glycine--tRNA ligase.